The chain runs to 205 residues: Ribosomal RNA small subunit methyltransferase G 1 (205 aa).

Residues glycine 77, leucine 82, glutamate 100–serine 102, leucine 129–glutamate 130, and arginine 138 contribute to the S-adenosyl-L-methionine site.

It belongs to the methyltransferase superfamily. RNA methyltransferase RsmG family.

It is found in the cytoplasm. It carries out the reaction guanosine(527) in 16S rRNA + S-adenosyl-L-methionine = N(7)-methylguanosine(527) in 16S rRNA + S-adenosyl-L-homocysteine. Its function is as follows. Specifically methylates the N7 position of guanine in position 527 of 16S rRNA. The chain is Ribosomal RNA small subunit methyltransferase G 1 from Bdellovibrio bacteriovorus (strain ATCC 15356 / DSM 50701 / NCIMB 9529 / HD100).